A 428-amino-acid chain; its full sequence is Arabinosyltransferase RRA2 (428 aa).

The Cytoplasmic portion of the chain corresponds to 1–15 (MAGRRDRIQQLRGSR). Residues 16 to 36 (IAIAIFVGILIGCVCSVLFPN) traverse the membrane as a helical; Signal-anchor for type II membrane protein segment. The Lumenal segment spans residues 37–428 (GFFNSGSSLI…ALDSFPDGSD (392 aa)). The short motif at 250–252 (DVD) is the DXD motif element. N-linked (GlcNAc...) asparagine glycosylation is present at Asn-278.

The protein belongs to the glycosyltransferase 77 family. Expressed in roots, rosette and cauline leaves, stems, flowers and siliques.

The protein resides in the golgi apparatus membrane. In terms of biological role, plays a role in the arabinosylation of cell wall components. Involved in the arabinosylation of extensin proteins in root hair cells. Extensins are structural glycoproteins present in cell walls and its arabinosylation is important for root hair cell development. In Arabidopsis thaliana (Mouse-ear cress), this protein is Arabinosyltransferase RRA2.